The chain runs to 238 residues: Ribosomal RNA small subunit methyltransferase G (238 aa).

S-adenosyl-L-methionine-binding positions include Gly-78, Phe-83, 129 to 130 (AE), and Arg-148. Residues 216 to 238 (EKKKETPKKYPRKAGTPAKNPIK) form a disordered region.

This sequence belongs to the methyltransferase superfamily. RNA methyltransferase RsmG family.

The protein resides in the cytoplasm. Its function is as follows. Specifically methylates the N7 position of a guanine in 16S rRNA. The sequence is that of Ribosomal RNA small subunit methyltransferase G from Lactococcus lactis subsp. lactis (strain IL1403) (Streptococcus lactis).